A 171-amino-acid chain; its full sequence is ATP synthase subunit b (171 aa).

Residues 12–34 form a helical membrane-spanning segment; it reads FALNLNLFETNVINLAVVAFGLY.

This sequence belongs to the ATPase B chain family. In terms of assembly, F-type ATPases have 2 components, F(1) - the catalytic core - and F(0) - the membrane proton channel. F(1) has five subunits: alpha(3), beta(3), gamma(1), delta(1), epsilon(1). F(0) has four main subunits: a(1), b(1), b'(1) and c(10-14). The alpha and beta chains form an alternating ring which encloses part of the gamma chain. F(1) is attached to F(0) by a central stalk formed by the gamma and epsilon chains, while a peripheral stalk is formed by the delta, b and b' chains.

The protein localises to the cellular thylakoid membrane. In terms of biological role, f(1)F(0) ATP synthase produces ATP from ADP in the presence of a proton or sodium gradient. F-type ATPases consist of two structural domains, F(1) containing the extramembraneous catalytic core and F(0) containing the membrane proton channel, linked together by a central stalk and a peripheral stalk. During catalysis, ATP synthesis in the catalytic domain of F(1) is coupled via a rotary mechanism of the central stalk subunits to proton translocation. Functionally, component of the F(0) channel, it forms part of the peripheral stalk, linking F(1) to F(0). The chain is ATP synthase subunit b from Prochlorococcus marinus (strain SARG / CCMP1375 / SS120).